The chain runs to 369 residues: Aminomethyltransferase (369 aa).

The protein belongs to the GcvT family. In terms of assembly, the glycine cleavage system is composed of four proteins: P, T, L and H.

The catalysed reaction is N(6)-[(R)-S(8)-aminomethyldihydrolipoyl]-L-lysyl-[protein] + (6S)-5,6,7,8-tetrahydrofolate = N(6)-[(R)-dihydrolipoyl]-L-lysyl-[protein] + (6R)-5,10-methylene-5,6,7,8-tetrahydrofolate + NH4(+). Functionally, the glycine cleavage system catalyzes the degradation of glycine. The sequence is that of Aminomethyltransferase from Rippkaea orientalis (strain PCC 8801 / RF-1) (Cyanothece sp. (strain PCC 8801)).